A 276-amino-acid polypeptide reads, in one-letter code: MKAQILREMKVLKAIEPEFEVQRRVAFIKTKLKEARSKALVLGISGGVDSSTAGRLCQLAINSLNSEHPEGGYQFIAVRLPYQIQKDEHEAQQACQFIQPSKLVTVNVHQGVDGVHQATLSAFIDAGLTTPDAAKVDFIKGNVKARMRMIAQYELAGLVGGLVVGTDHSAENITGFYTKWGDGACDLAPLFGLNKRQVRQLAAYLGAPESLVYKAPTADLEDNKPLLEDEVALGLTYEQIDDFLEGKVVDKAVEEKLINIYKATQHKRQPIPTIYD.

43–50 (GISGGVDS) contributes to the ATP binding site. Residue Asp49 coordinates Mg(2+). Arg146 provides a ligand contact to deamido-NAD(+). Thr166 is an ATP binding site. Glu171 is a Mg(2+) binding site. Deamido-NAD(+) is bound by residues Lys179 and Asp186. Residues Lys195 and Thr217 each contribute to the ATP site. 266–267 (HK) contributes to the deamido-NAD(+) binding site.

It belongs to the NAD synthetase family. Homodimer.

It carries out the reaction deamido-NAD(+) + NH4(+) + ATP = AMP + diphosphate + NAD(+) + H(+). Its pathway is cofactor biosynthesis; NAD(+) biosynthesis; NAD(+) from deamido-NAD(+) (ammonia route): step 1/1. Functionally, catalyzes the ATP-dependent amidation of deamido-NAD to form NAD. Uses ammonia as a nitrogen source. In Shewanella oneidensis (strain ATCC 700550 / JCM 31522 / CIP 106686 / LMG 19005 / NCIMB 14063 / MR-1), this protein is NH(3)-dependent NAD(+) synthetase.